Here is a 103-residue protein sequence, read N- to C-terminus: Flagellar hook-basal body complex protein FliE (103 aa).

Belongs to the FliE family.

The protein resides in the bacterial flagellum basal body. In Yersinia pestis, this protein is Flagellar hook-basal body complex protein FliE.